Reading from the N-terminus, the 286-residue chain is ATP-binding protein ChvD (286 aa).

The region spanning 21–85 (KLQDMIDSQN…DLLLLDEPTN (65 aa)) is the ABC transporter domain.

Belongs to the ABC transporter superfamily.

Functionally, the induction of virG by growth under acidic conditions and by phosphate starvation, in the absence of plant inducers, is influenced by ChvD. The sequence is that of ATP-binding protein ChvD (chvD) from Rhizobium radiobacter (Agrobacterium tumefaciens).